The sequence spans 636 residues: DNA-directed RNA polymerase III subunit RPC3 (636 aa).

Residues 366-385 (SMQRRSQERSTHQGQSHKRL) form a disordered region. The interval 563–584 (LAWNIANSIHKTEILKEENFTL) is leucine-zipper.

It belongs to the RNA polymerase beta chain family. As to quaternary structure, component of the RNA polymerase III (Pol III) complex consisting of 17 subunits.

The protein resides in the nucleus. In terms of biological role, DNA-dependent RNA polymerase catalyzes the transcription of DNA into RNA using the four ribonucleoside triphosphates as substrates. Specific core component of RNA polymerase III which synthesizes small RNAs, such as 5S rRNA and tRNAs. The polypeptide is DNA-directed RNA polymerase III subunit RPC3 (RPC82) (Eremothecium gossypii (strain ATCC 10895 / CBS 109.51 / FGSC 9923 / NRRL Y-1056) (Yeast)).